The following is a 344-amino-acid chain: Dihydroorotase (344 aa).

2 residues coordinate Zn(2+): H13 and H15. Residues 15 to 17 and N41 each bind substrate; that span reads HLR. Zn(2+)-binding residues include K98, H135, and H173. An N6-carboxylysine modification is found at K98. Substrate is bound at residue H135. L218 provides a ligand contact to substrate. Position 247 (D247) interacts with Zn(2+). D247 is an active-site residue. The substrate site is built by H251 and A263.

The protein belongs to the metallo-dependent hydrolases superfamily. DHOase family. Class II DHOase subfamily. Homodimer. The cofactor is Zn(2+).

It catalyses the reaction (S)-dihydroorotate + H2O = N-carbamoyl-L-aspartate + H(+). Its pathway is pyrimidine metabolism; UMP biosynthesis via de novo pathway; (S)-dihydroorotate from bicarbonate: step 3/3. Catalyzes the reversible cyclization of carbamoyl aspartate to dihydroorotate. This Neisseria gonorrhoeae (strain ATCC 700825 / FA 1090) protein is Dihydroorotase.